We begin with the raw amino-acid sequence, 420 residues long: E3 ubiquitin protein ligase DRIP2 (420 aa).

The RING-type zinc finger occupies 20 to 61 (CPLCDKLLRDATTISECLHTFCRKCIYEKITEDEIESCPVCD). Polar residues predominate over residues 113 to 123 (ISSLVVSTPRV). 2 disordered regions span residues 113–201 (ISSL…KDVD) and 226–289 (DPKS…TFGD). Residues 154–165 (KKEEEFGDDHVE) show a composition bias toward basic and acidic residues. Polar residues-rich tracts occupy residues 166–194 (SASS…SLSN) and 232–242 (GNASHNDVQGS). Over residues 244–253 (TKTKDHKRKC) the composition is skewed to basic residues. A compositionally biased stretch (polar residues) spans 260–273 (SNNGDPTTSETATL). Residues 274–284 (KRTRRTRRKRS) show a composition bias toward basic residues.

Interacts with DREB2A. Auto-ubiquitinated. Expressed in roots, leaves and flowers.

The enzyme catalyses S-ubiquitinyl-[E2 ubiquitin-conjugating enzyme]-L-cysteine + [acceptor protein]-L-lysine = [E2 ubiquitin-conjugating enzyme]-L-cysteine + N(6)-ubiquitinyl-[acceptor protein]-L-lysine.. The protein operates within protein modification; protein ubiquitination. E3 ubiquitin-protein ligase that acts as a negative regulator of the response to water stress. Mediates ubiquitination and subsequent proteasomal degradation of the drought-induced transcriptional activator DREB2A. Functionally redundant with DRIP1. The protein is E3 ubiquitin protein ligase DRIP2 (DRIP2) of Arabidopsis thaliana (Mouse-ear cress).